Here is a 600-residue protein sequence, read N- to C-terminus: Elongation factor 4 (600 aa).

The tr-type G domain occupies 5-187 (SRIRNFSIIA…AIVTRLPPPK (183 aa)). GTP-binding positions include 17–22 (DHGKST) and 134–137 (NKID).

This sequence belongs to the TRAFAC class translation factor GTPase superfamily. Classic translation factor GTPase family. LepA subfamily.

Its subcellular location is the cell inner membrane. The enzyme catalyses GTP + H2O = GDP + phosphate + H(+). Its function is as follows. Required for accurate and efficient protein synthesis under certain stress conditions. May act as a fidelity factor of the translation reaction, by catalyzing a one-codon backward translocation of tRNAs on improperly translocated ribosomes. Back-translocation proceeds from a post-translocation (POST) complex to a pre-translocation (PRE) complex, thus giving elongation factor G a second chance to translocate the tRNAs correctly. Binds to ribosomes in a GTP-dependent manner. This chain is Elongation factor 4, found in Rhodospirillum centenum (strain ATCC 51521 / SW).